We begin with the raw amino-acid sequence, 159 residues long: Cytochrome c-type biogenesis CcmH-like mitochondrial protein (159 aa).

Residues 1-82 are Mitochondrial intermembrane-facing; it reads MEKTDEERKK…ETVLYAPKFD (82 aa). Residues Cys-27 and Cys-30 each contribute to the heme site. Residues 83–105 traverse the membrane as a helical segment; the sequence is LQTAALWLTPVIIAGGTAAGIVY. Over 106–159 the chain is Mitochondrial matrix; it reads QKHRLRKNVDIMALNLIRGVPLTPKERVTILDVLIPPSPPPQGVVSRLRRWLNR.

It belongs to the CcmH/CycL/Ccl2/NrfF family. Interacts (via N-terminus) with CYTC-1. Interacts with CCMFN1 and CCMFN2.

It localises to the mitochondrion inner membrane. Plays a central role in mitochondrial cytochrome c maturation. Probable component of a heme lyase complex involved in the reduction of apocytochrome c. Forms a complex with CCMF proteins (CCMFC, CCMFN1 and CCMFN2) that performs the assembly of heme with c-type apocytochromes in mitochondria. The protein is Cytochrome c-type biogenesis CcmH-like mitochondrial protein of Arabidopsis thaliana (Mouse-ear cress).